A 614-amino-acid chain; its full sequence is Sodium- and chloride-dependent betaine transporter (614 aa).

The Cytoplasmic portion of the chain corresponds to 1 to 44 (MDGKVAVQECGPPAVSWVPEEGEKLDQEDEDQVKDRGQWTNKME). 3 consecutive transmembrane segments (helical) span residues 45 to 65 (FVLS…FPYL), 73 to 92 (AFFI…VFFL), and 117 to 137 (GIGL…IIIL). Topologically, residues 138–210 (AWALFYLFSS…SGIHDLGSLR (73 aa)) are extracellular. A disulfide bridge connects residues Cys157 and Cys166. Residues Asn171 and Asn183 are each glycosylated (N-linked (GlcNAc...) asparagine). The next 9 membrane-spanning stretches (helical) occupy residues 211-229 (WELA…FCIW), 238-255 (VVYF…ILLI), 291-308 (IFFS…LGSY), 320-341 (IALC…FSIL), 374-393 (MPLS…FLGL), 423-441 (LLIL…FLVT), 458-478 (GICL…VYGA), 499-518 (ISWL…FSLS), and 538-556 (IGWF…FVVI). Over 557-614 (TLLKTRGPFRKRLRQLITPDSSLPQPKQHPCLDGSAGRNFGPSPTREGLIAGEKETHL) the chain is Cytoplasmic. The interval 576 to 614 (DSSLPQPKQHPCLDGSAGRNFGPSPTREGLIAGEKETHL) is disordered.

This sequence belongs to the sodium:neurotransmitter symporter (SNF) (TC 2.A.22) family. SLC6A12 subfamily. Interacts with LIN7C. In terms of tissue distribution, expressed in kidney, liver, heart, skeletal muscle, placenta, and a widespread distribution in the brain.

The protein localises to the basolateral cell membrane. The protein resides in the cell membrane. It catalyses the reaction 4-aminobutanoate(out) + chloride(out) + 3 Na(+)(out) = 4-aminobutanoate(in) + chloride(in) + 3 Na(+)(in). The enzyme catalyses glycine betaine(out) + 2 chloride(out) + 3 Na(+)(out) = glycine betaine(in) + 2 chloride(in) + 3 Na(+)(in). In terms of biological role, transporter that mediates cellular uptake of betaine and GABA in a sodium- and chloride-dependent process. May have a role in regulation of GABAergic transmission in the brain through the reuptake of GABA into presynaptic terminals, as well as in osmotic regulation. Probably also involved in renal and hepatic osmotic regulation. The chain is Sodium- and chloride-dependent betaine transporter from Homo sapiens (Human).